We begin with the raw amino-acid sequence, 331 residues long: UPF0194 membrane protein YbhG (331 aa).

The N-terminal stretch at 1–19 (MKKPVVIGLAIAAIVAVIA) is a signal peptide. Positions 107–208 (EEIAQAAAAV…LDLQDTTLIA (102 aa)) form a coiled coil.

The protein belongs to the UPF0194 family.

Its subcellular location is the periplasm. This chain is UPF0194 membrane protein YbhG, found in Salmonella heidelberg (strain SL476).